Here is a 321-residue protein sequence, read N- to C-terminus: Peptide transport system permease protein SapB (321 aa).

8 helical membrane passes run 8 to 28 (HILW…VILL), 41 to 61 (IYIG…GITY), 82 to 102 (CFIT…ISAV), 117 to 137 (YVGL…VAAL), 150 to 170 (LLYE…FMEV), 180 to 200 (ILQH…MEII), 249 to 269 (VFTL…WPGI), and 289 to 309 (VIVI…FTFI). The 229-residue stretch at 75 to 303 (LPPTLELCFI…VCIILIDTFT (229 aa)) folds into the ABC transmembrane type-1 domain.

This sequence belongs to the binding-protein-dependent transport system permease family. OppBC subfamily.

It localises to the cell inner membrane. In terms of biological role, involved in a peptide intake transport system that plays a role in the resistance to antimicrobial peptides. The chain is Peptide transport system permease protein SapB (sapB) from Haemophilus influenzae (strain ATCC 51907 / DSM 11121 / KW20 / Rd).